Here is a 410-residue protein sequence, read N- to C-terminus: Divergent protein kinase domain 1C (410 aa).

Residues 1–19 (MARAAGERGRAARCGRWRR) are Cytoplasmic-facing. The May mediate ER retention signature appears at 18-19 (RR). A helical membrane pass occupies residues 20 to 40 (GALLAFAAWTAGWVLAAALLL). The Lumenal portion of the chain corresponds to 41–410 (RAHPSVLSER…TLKELQEAEK (370 aa)).

Belongs to the DIPK family. In terms of processing, among the many cysteines in the lumenal domain, most are probably involved in disulfide bonds. As to expression, mainly expressed in the brain and eye, some expression in kidney and skeletal muscle.

The protein resides in the endoplasmic reticulum membrane. The chain is Divergent protein kinase domain 1C (Dipk1c) from Mus musculus (Mouse).